The sequence spans 320 residues: Ferrochelatase (320 aa).

2 residues coordinate Fe cation: H194 and E275.

Belongs to the ferrochelatase family.

It is found in the cytoplasm. It carries out the reaction heme b + 2 H(+) = protoporphyrin IX + Fe(2+). It functions in the pathway porphyrin-containing compound metabolism; protoheme biosynthesis; protoheme from protoporphyrin-IX: step 1/1. Catalyzes the ferrous insertion into protoporphyrin IX. In Enterobacter sp. (strain 638), this protein is Ferrochelatase.